The primary structure comprises 125 residues: Large ribosomal subunit protein bL12 (125 aa).

The protein belongs to the bacterial ribosomal protein bL12 family. In terms of assembly, homodimer. Part of the ribosomal stalk of the 50S ribosomal subunit. Forms a multimeric L10(L12)X complex, where L10 forms an elongated spine to which 2 to 4 L12 dimers bind in a sequential fashion. Binds GTP-bound translation factors.

Its function is as follows. Forms part of the ribosomal stalk which helps the ribosome interact with GTP-bound translation factors. Is thus essential for accurate translation. The polypeptide is Large ribosomal subunit protein bL12 (Parabacteroides distasonis (strain ATCC 8503 / DSM 20701 / CIP 104284 / JCM 5825 / NCTC 11152)).